The sequence spans 193 residues: MGVAQSNTTLVAPQPKGIIDPATGKPVGSNDPFFGEINNELADKGFLVTSTDELINWARTGSLMWMTFGLACCAVEMMQVSMPRYDVERFGFAPRASPRQSDVMIVAGTLTNKMAPALRKVYDQMPEPRYVISMGSCANGGGYYHYSYSVVRGCDRIVPIDIYIPGCPPTAEALLYGVLLLQKKIRRTGTIER.

[4Fe-4S] cluster contacts are provided by C72, C73, C137, and C167.

This sequence belongs to the complex I 20 kDa subunit family. As to quaternary structure, NDH-1 is composed of 14 different subunits. Subunits NuoB, C, D, E, F, and G constitute the peripheral sector of the complex. [4Fe-4S] cluster is required as a cofactor.

It is found in the cell inner membrane. The catalysed reaction is a quinone + NADH + 5 H(+)(in) = a quinol + NAD(+) + 4 H(+)(out). NDH-1 shuttles electrons from NADH, via FMN and iron-sulfur (Fe-S) centers, to quinones in the respiratory chain. The immediate electron acceptor for the enzyme in this species is believed to be ubiquinone. Couples the redox reaction to proton translocation (for every two electrons transferred, four hydrogen ions are translocated across the cytoplasmic membrane), and thus conserves the redox energy in a proton gradient. The chain is NADH-quinone oxidoreductase subunit B from Rhizobium rhizogenes (strain K84 / ATCC BAA-868) (Agrobacterium radiobacter).